The primary structure comprises 238 residues: Uridylate kinase (238 aa).

Position 12 to 15 (12 to 15) interacts with ATP; sequence KLSG. A UMP-binding site is contributed by glycine 54. Residues glycine 55 and arginine 59 each coordinate ATP. UMP contacts are provided by residues aspartate 74 and 135-142; that span reads TGNPYFTT. 3 residues coordinate ATP: threonine 162, tyrosine 168, and aspartate 171.

Belongs to the UMP kinase family. In terms of assembly, homohexamer.

It localises to the cytoplasm. The enzyme catalyses UMP + ATP = UDP + ADP. It functions in the pathway pyrimidine metabolism; CTP biosynthesis via de novo pathway; UDP from UMP (UMPK route): step 1/1. Its activity is regulated as follows. Inhibited by UTP. In terms of biological role, catalyzes the reversible phosphorylation of UMP to UDP. This is Uridylate kinase from Nitratidesulfovibrio vulgaris (strain ATCC 29579 / DSM 644 / CCUG 34227 / NCIMB 8303 / VKM B-1760 / Hildenborough) (Desulfovibrio vulgaris).